A 2270-amino-acid chain; its full sequence is Protein DOP1B (2270 aa).

Disordered regions lie at residues 548-572, 697-716, and 1084-1145; these read METP…VEGE, LKQR…TEEE, and QEQD…DMPR. Polar residues predominate over residues 1095–1145; it reads ADTSTGHNDSDNTSSFTPSSVDLSSDQNYRDNTAGQVTHKNTGQQNMDMPR.

The protein belongs to the DOP1 family.

Its subcellular location is the golgi apparatus membrane. Functionally, may be involved in protein traffic between late Golgi and early endosomes. The chain is Protein DOP1B (dop1b) from Xenopus laevis (African clawed frog).